An 872-amino-acid chain; its full sequence is Alanine--tRNA ligase (872 aa).

4 residues coordinate Zn(2+): His-566, His-570, Cys-668, and His-672.

It belongs to the class-II aminoacyl-tRNA synthetase family. It depends on Zn(2+) as a cofactor.

It is found in the cytoplasm. The catalysed reaction is tRNA(Ala) + L-alanine + ATP = L-alanyl-tRNA(Ala) + AMP + diphosphate. Its function is as follows. Catalyzes the attachment of alanine to tRNA(Ala) in a two-step reaction: alanine is first activated by ATP to form Ala-AMP and then transferred to the acceptor end of tRNA(Ala). Also edits incorrectly charged Ser-tRNA(Ala) and Gly-tRNA(Ala) via its editing domain. In Lactococcus lactis subsp. lactis (strain IL1403) (Streptococcus lactis), this protein is Alanine--tRNA ligase.